Reading from the N-terminus, the 268-residue chain is DNA repair protein RecO (268 aa).

It belongs to the RecO family.

In terms of biological role, involved in DNA repair and RecF pathway recombination. The polypeptide is DNA repair protein RecO (Mycobacterium leprae (strain Br4923)).